A 120-amino-acid polypeptide reads, in one-letter code: Cell division topological specificity factor (120 aa).

The disordered stretch occupies residues 93–120 (LNSCEGENPQQDPGAAPSEGGHLSSPSP).

It belongs to the MinE family.

Its function is as follows. Prevents the cell division inhibition by proteins MinC and MinD at internal division sites while permitting inhibition at polar sites. This ensures cell division at the proper site by restricting the formation of a division septum at the midpoint of the long axis of the cell. This Synechococcus sp. (strain JA-3-3Ab) (Cyanobacteria bacterium Yellowstone A-Prime) protein is Cell division topological specificity factor.